A 108-amino-acid chain; its full sequence is Iron-sulfur cluster assembly protein CyaY (108 aa).

This sequence belongs to the frataxin family.

Involved in iron-sulfur (Fe-S) cluster assembly. May act as a regulator of Fe-S biogenesis. The protein is Iron-sulfur cluster assembly protein CyaY of Burkholderia vietnamiensis (strain G4 / LMG 22486) (Burkholderia cepacia (strain R1808)).